The primary structure comprises 511 residues: Tyrosine--tRNA ligase, chloroplastic/mitochondrial (511 aa).

Tyrosine 118 lines the L-tyrosine pocket. Aspartate 122 provides a ligand contact to ATP. A 'HIGH' region motif is present at residues 123-132 (PTAESLHLGN). Aspartate 162, tyrosine 256, glutamine 260, aspartate 263, and glutamine 282 together coordinate L-tyrosine. Positions 318–322 (KFGKS) match the 'KMSKS' region motif. Residue lysine 321 coordinates ATP. Residues 444–510 (LSIVDLSVSA…GKKNKVVVRI (67 aa)) form the S4 RNA-binding domain.

Belongs to the class-I aminoacyl-tRNA synthetase family.

It is found in the plastid. It localises to the chloroplast. The protein resides in the mitochondrion. It catalyses the reaction tRNA(Tyr) + L-tyrosine + ATP = L-tyrosyl-tRNA(Tyr) + AMP + diphosphate + H(+). Functionally, catalyzes the attachment of tyrosine to tRNA(Tyr) in a two-step reaction: tyrosine is first activated by ATP to form Tyr-AMP and then transferred to the acceptor end of tRNA(Tyr). In Arabidopsis thaliana (Mouse-ear cress), this protein is Tyrosine--tRNA ligase, chloroplastic/mitochondrial.